The primary structure comprises 565 residues: NAD-dependent malic enzyme (565 aa).

Tyrosine 104 serves as the catalytic Proton donor. Arginine 157 contacts NAD(+). Lysine 175 acts as the Proton acceptor in catalysis. Positions 246, 247, and 270 each coordinate a divalent metal cation. NAD(+) is bound by residues aspartate 270 and asparagine 418.

It belongs to the malic enzymes family. As to quaternary structure, homotetramer. Mg(2+) is required as a cofactor. Requires Mn(2+) as cofactor.

It carries out the reaction (S)-malate + NAD(+) = pyruvate + CO2 + NADH. It catalyses the reaction oxaloacetate + H(+) = pyruvate + CO2. The polypeptide is NAD-dependent malic enzyme (Salmonella arizonae (strain ATCC BAA-731 / CDC346-86 / RSK2980)).